Reading from the N-terminus, the 321-residue chain is AA9 family lytic polysaccharide monooxygenase C (321 aa).

The signal sequence occupies residues 1–18 (MKLQLIIPFSFLISYVSA). H19 serves as a coordination point for Cu(2+). N-linked (GlcNAc...) asparagine glycosylation is present at N33. 2 disulfides stabilise this stretch: C57-C191 and C161-C242. H103 provides a ligand contact to Cu(2+). 2 residues coordinate O2: H177 and Q186. Residue Y188 coordinates Cu(2+). A glycan (N-linked (GlcNAc...) asparagine) is linked at N195. The CBM1 domain occupies 283 to 319 (GTAAIYAQCGGQGWTGATVCASGSKCVVSSAFYSQCL).

The protein belongs to the polysaccharide monooxygenase AA9 family. The cofactor is Cu(2+).

It is found in the secreted. It catalyses the reaction [(1-&gt;4)-beta-D-glucosyl]n+m + reduced acceptor + O2 = 4-dehydro-beta-D-glucosyl-[(1-&gt;4)-beta-D-glucosyl]n-1 + [(1-&gt;4)-beta-D-glucosyl]m + acceptor + H2O.. Major lytic polysaccharide monooxygenase (LPMO) that depolymerizes crystalline and amorphous polysaccharides via the oxidation of scissile alpha- or beta-(1-4)-glycosidic bonds, yielding C1 and C4 oxidation products. Catalysis by LPMOs requires the reduction of the active-site copper from Cu(II) to Cu(I) by a reducing agent and H(2)O(2) or O(2) as a cosubstrate. This chain is AA9 family lytic polysaccharide monooxygenase C, found in Botryotinia fuckeliana (strain B05.10) (Noble rot fungus).